The chain runs to 438 residues: (S)-3,5-dihydroxyphenylglycine transaminase (438 aa).

Lysine 266 carries the N6-(pyridoxal phosphate)lysine modification.

It belongs to the class-I pyridoxal-phosphate-dependent aminotransferase family. Requires pyridoxal 5'-phosphate as cofactor.

It carries out the reaction (S)-3,5-dihydroxyphenylglycine + 2-oxoglutarate = 2-(3,5-dihydroxyphenyl)-2-oxoacetate + L-glutamate. The protein operates within antibiotic biosynthesis; vancomycin biosynthesis. Functionally, catalyzes the transamination of p-hydroxybenzoylformate to L-p-hydroxyphenylglycine as part of the biosynthesis of the (S)-3,5-dihydroxyphenylglycine constituent of the glycopeptide antibiotic chloroeremomycin, a member of the vancomycin group of antibiotics. The polypeptide is (S)-3,5-dihydroxyphenylglycine transaminase (hpgT) (Amycolatopsis orientalis (Nocardia orientalis)).